Reading from the N-terminus, the 185-residue chain is Prenylated Rab acceptor protein 1 (185 aa).

The Cytoplasmic segment spans residues 1-78 (MAAQKDQQKD…RNVEYYQSNY (78 aa)). A required for interaction with prenylated RAB3A and VAMP2 region spans residues 30 to 54 (AGREWLERRRATIRPWGTFVDQQRF). 2 consecutive transmembrane segments (helical) span residues 79–94 (VFVF…VTSP) and 95–112 (MLLV…ILYL). Residues 113 to 131 (RTLQSKLVLFGREVSPAHQ) are Cytoplasmic-facing. Transmembrane regions (helical) follow at residues 132-148 (YALA…LAGA) and 149-165 (GSAV…LIGS). The segment at 165 to 185 (SHAAFHQIEPADGEELQMEPV) is required for interaction with GDI1. Over 166–185 (HAAFHQIEPADGEELQMEPV) the chain is Cytoplasmic. Residues 175 to 185 (ADGEELQMEPV) form a required for interaction with prenylated RAB3A and VAMP2 region. A homodimerization region spans residues 175-185 (ADGEELQMEPV).

This sequence belongs to the PRA1 family. Homodimers. Interacts specifically with both prenylated Rab proteins (including RAB3A and RAB1), and VAMP2 (synaptobrevin-2), in an exclusive way. Interacts with NDRG1. Interacts with free GDI1 in the absence of Rab proteins. Also interacts with PCLO. Ubiquitous.

The protein resides in the cell membrane. Its subcellular location is the cytoplasm. It is found in the golgi apparatus. The protein localises to the cytoplasmic vesicle. It localises to the secretory vesicle. The protein resides in the synaptic vesicle. Functionally, general Rab protein regulator required for vesicle formation from the Golgi complex. May control vesicle docking and fusion by mediating the action of Rab GTPases to the SNARE complexes. In addition it inhibits the removal of Rab GTPases from the membrane by GDI1. In Rattus norvegicus (Rat), this protein is Prenylated Rab acceptor protein 1 (Rabac1).